A 364-amino-acid chain; its full sequence is Protein Wnt-6 (364 aa).

The first 23 residues, 1–23 (MLPPVPSRLGLLLLLLCPAHVDG), serve as a signal peptide directing secretion. Intrachain disulfides connect Cys75–Cys86, Cys123–Cys131, Cys133–Cys171, Cys221–Cys235, Cys223–Cys230, Cys293–Cys324, Cys309–Cys319, Cys323–Cys363, Cys339–Cys354, Cys341–Cys351, and Cys346–Cys347. An N-linked (GlcNAc...) asparagine glycan is attached at Asn85. The segment at 140–162 (APPRPSGLLGTPGPPGPTGSPDA) is disordered. A lipid anchor (O-palmitoleoyl serine; by PORCN) is attached at Ser227. Asn310 carries N-linked (GlcNAc...) asparagine glycosylation.

It belongs to the Wnt family. In terms of assembly, interacts with PORCN. In terms of processing, palmitoleoylation is required for efficient binding to frizzled receptors. Depalmitoleoylation leads to Wnt signaling pathway inhibition. As to expression, detected in ileum, colon and stomach (at protein level).

It is found in the secreted. The protein resides in the extracellular space. The protein localises to the extracellular matrix. In terms of biological role, ligand for members of the frizzled family of seven transmembrane receptors. Probable developmental protein. May be a signaling molecule which affects the development of discrete regions of tissues. Is likely to signal over only few cell diameters. The chain is Protein Wnt-6 (Wnt6) from Mus musculus (Mouse).